A 335-amino-acid chain; its full sequence is Tetraacyldisaccharide 4'-kinase (335 aa).

59-66 (TAGGNGKT) contacts ATP.

The protein belongs to the LpxK family.

The catalysed reaction is a lipid A disaccharide + ATP = a lipid IVA + ADP + H(+). It functions in the pathway glycolipid biosynthesis; lipid IV(A) biosynthesis; lipid IV(A) from (3R)-3-hydroxytetradecanoyl-[acyl-carrier-protein] and UDP-N-acetyl-alpha-D-glucosamine: step 6/6. In terms of biological role, transfers the gamma-phosphate of ATP to the 4'-position of a tetraacyldisaccharide 1-phosphate intermediate (termed DS-1-P) to form tetraacyldisaccharide 1,4'-bis-phosphate (lipid IVA). This chain is Tetraacyldisaccharide 4'-kinase, found in Aliivibrio salmonicida (strain LFI1238) (Vibrio salmonicida (strain LFI1238)).